The chain runs to 386 residues: Phosphatidyl-myo-inositol mannosyltransferase (386 aa).

2 residues coordinate GDP-alpha-D-mannose: Y9 and G16. Residues Q18, 62-63 (YN), and R68 each bind a 1,2-diacyl-sn-glycero-3-phospho-(1D-myo-inositol). GDP-alpha-D-mannose is bound by residues R196, 201–202 (RK), 251–253 (VDD), K256, 274–278 (ESFGI), and E282.

This sequence belongs to the glycosyltransferase group 1 family. Glycosyltransferase 4 subfamily. As to quaternary structure, monomer. Mg(2+) serves as cofactor.

It localises to the cell membrane. It carries out the reaction a 1,2-diacyl-sn-glycero-3-phospho-(1D-myo-inositol) + GDP-alpha-D-mannose = a 1,2-diacyl-sn-glycero-3-phospho-[alpha-D-mannopyranosyl-(1&lt;-&gt;6)-D-myo-inositol] + GDP + H(+). It functions in the pathway phospholipid metabolism; phosphatidylinositol metabolism. Involved in the biosynthesis of phosphatidyl-myo-inositol mannosides (PIM) which are early precursors in the biosynthesis of lipomannans (LM) and lipoarabinomannans (LAM). Catalyzes the addition of a mannosyl residue from GDP-D-mannose (GDP-Man) to the position 2 of the carrier lipid phosphatidyl-myo-inositol (PI) to generate a phosphatidyl-myo-inositol bearing an alpha-1,2-linked mannose residue (PIM1). In contrary to PimB, the mannosyltransferase PimA is unable to transfer a mannose residue to the position 6 of the phosphatidyl-myo-inositol of PIM1. The sequence is that of Phosphatidyl-myo-inositol mannosyltransferase from Mycolicibacterium smegmatis (strain ATCC 700084 / mc(2)155) (Mycobacterium smegmatis).